Consider the following 837-residue polypeptide: Intestinal mucin-like protein (837 aa).

A run of 4 repeats spans residues 17–27, 28–38, 39–50, and 51–62. The segment at 17-70 is 5 X 11 AA approximate tandem repeats; it reads PSTPSTPPPSTPTTPTSSQTTTPSTPSTTSSKSTPSTPQSTSSKSTPSTPPKTT. Positions 17–75 are disordered; that stretch reads PSTPSTPPPSTPTTPTSSQTTTPSTPSTTSSKSTPSTPQSTSSKSTPSTPPKTTLPGCL. The span at 29–70 shows a compositional bias: low complexity; it reads TTPTSSQTTTPSTPSTTSSKSTPSTPQSTSSKSTPSTPPKTT. A 5; truncated repeat occupies 63–70; that stretch reads PSTPPKTT. Asparagine 91 and asparagine 164 each carry an N-linked (GlcNAc...) asparagine glycan. Residues 141-324 enclose the VWFD domain; it reads CYCTGWGDPH…VNDPSKPHCP (184 aa). 3 disulfide bridges follow: cysteine 143/cysteine 284, cysteine 165/cysteine 323, and cysteine 189/cysteine 197. The interval 149-837 is probably important for disulfide-bond mediated mucin polymerization (link domain); it reads PHFVTFDGLY…RSSPRLLGRK (689 aa). Residues asparagine 278, asparagine 289, asparagine 344, asparagine 410, asparagine 444, asparagine 515, asparagine 538, asparagine 612, asparagine 627, asparagine 695, asparagine 727, and asparagine 749 are each glycosylated (N-linked (GlcNAc...) asparagine). VWFC domains lie at 472-543 and 581-648; these read CGCV…TSCK and GVCV…KKCQ. Cystine bridges form between cysteine 732–cysteine 779, cysteine 746–cysteine 793, cysteine 755–cysteine 809, and cysteine 759–cysteine 811. Positions 732 to 817 constitute a CTCK domain; the sequence is CSAIPVMKEI…SCLCQGTVCE (86 aa).

Multimeric. Coats the epithelia of the intestines.

The protein localises to the secreted. This chain is Intestinal mucin-like protein, found in Rattus norvegicus (Rat).